The primary structure comprises 150 residues: Profilin (150 aa).

It belongs to the profilin family. In terms of assembly, occurs in many kinds of cells as a complex with monomeric actin in a 1:1 ratio.

The protein localises to the cytoplasm. It localises to the cytoskeleton. Binds to actin and affects the structure of the cytoskeleton. At high concentrations, profilin prevents the polymerization of actin, whereas it enhances it at low concentrations. By binding to PIP2, it inhibits the formation of IP3 and DG. The sequence is that of Profilin from Trypanosoma brucei brucei.